Reading from the N-terminus, the 906-residue chain is Cadherin-2 (906 aa).

Positions 1-25 (MCRIAGAPRTLLPLLAALLQASVEA) are cleaved as a signal peptide. Residues 26 to 159 (SGEIALCKTG…HNGYLQRQKR (134 aa)) constitute a propeptide that is removed on maturation. Residues serine 96 and serine 135 each carry the phosphoserine modification. Cadherin domains are found at residues 160-267 (DWVI…RPEF), 268-382 (LHQV…PPEF), 383-497 (TAMT…NPYF), 498-603 (APNP…DNAP), and 604-714 (QVLP…DVDR). Topologically, residues 160–724 (DWVIPPINLP…IVGAGLGTGA (565 aa)) are extracellular. Glutamate 170 contributes to the Ca(2+) binding site. N-linked (GlcNAc...) asparagine glycosylation occurs at asparagine 190. Positions 226, 228, 259, 260, 261, 262, and 263 each coordinate Ca(2+). The N-linked (GlcNAc...) asparagine glycan is linked to asparagine 273. The Ca(2+) site is built by aspartate 293, aspartate 295, and asparagine 301. N-linked (GlcNAc...) asparagine glycosylation occurs at asparagine 325. Aspartate 353 is a binding site for Ca(2+). Residues asparagine 402, asparagine 572, asparagine 622, asparagine 651, and asparagine 692 are each glycosylated (N-linked (GlcNAc...) asparagine). Residues 725–745 (IIAILLCIIILLILVLMFVVW) form a helical membrane-spanning segment. Residues 746–906 (MKRRDKERQA…LAEMYGGGDD (161 aa)) lie on the Cytoplasmic side of the membrane. A compositionally biased stretch (low complexity) spans 863–880 (SGSTAGSLSSLNSSSSGG). The disordered stretch occupies residues 863–884 (SGSTAGSLSSLNSSSSGGEQDY).

In terms of assembly, homodimer (via extracellular region). Can also form heterodimers with other cadherins (via extracellular region). Dimerization occurs in trans, i.e. with a cadherin chain from another cell. Interacts with CDCP1. Interacts with PCDH8; this complex may also include TAOK2. The interaction with PCDH8 may lead to internalization through TAOK2/p38 MAPK pathway. Identified in a complex containing FGFR4, NCAM1, CDH2, PLCG1, FRS2, SRC, SHC1, GAP43 and CTTN. May interact with OBSCN (via protein kinase domain 2). Interacts with FBXO45. In terms of processing, cleaved by MMP24. Ectodomain cleavage leads to the generation of a soluble 90 kDa N-terminal soluble fragment and a 45 kDa membrane-bound C-terminal fragment 1 (CTF1), which is further cleaved by gamma-secretase into a 35 kDa. Cleavage in neural stem cells by MMP24 affects CDH2-mediated anchorage of neural stem cells to ependymocytes in the adult subependymal zone, leading to modulate neural stem cell quiescence. May be phosphorylated by OBSCN.

Its subcellular location is the cell membrane. It localises to the sarcolemma. It is found in the cell junction. The protein localises to the cell surface. The protein resides in the desmosome. Its subcellular location is the adherens junction. Calcium-dependent cell adhesion protein; preferentially mediates homotypic cell-cell adhesion by dimerization with a CDH2 chain from another cell. Cadherins may thus contribute to the sorting of heterogeneous cell types. Acts as a regulator of neural stem cells quiescence by mediating anchorage of neural stem cells to ependymocytes in the adult subependymal zone: upon cleavage by MMP24, CDH2-mediated anchorage is affected, leading to modulate neural stem cell quiescence. Plays a role in cell-to-cell junction formation between pancreatic beta cells and neural crest stem (NCS) cells, promoting the formation of processes by NCS cells. Required for proper neurite branching. Required for pre- and postsynaptic organization. CDH2 may be involved in neuronal recognition mechanism. In hippocampal neurons, may regulate dendritic spine density. The polypeptide is Cadherin-2 (CDH2) (Otolemur garnettii (Small-eared galago)).